Reading from the N-terminus, the 314-residue chain is 4-hydroxy-3-methylbut-2-enyl diphosphate reductase (314 aa).

Cysteine 12 serves as a coordination point for [4Fe-4S] cluster. (2E)-4-hydroxy-3-methylbut-2-enyl diphosphate contacts are provided by histidine 41 and histidine 74. Histidine 41 and histidine 74 together coordinate dimethylallyl diphosphate. 2 residues coordinate isopentenyl diphosphate: histidine 41 and histidine 74. Residue cysteine 96 participates in [4Fe-4S] cluster binding. Histidine 124 lines the (2E)-4-hydroxy-3-methylbut-2-enyl diphosphate pocket. Histidine 124 contacts dimethylallyl diphosphate. Histidine 124 contributes to the isopentenyl diphosphate binding site. Catalysis depends on glutamate 126, which acts as the Proton donor. Position 167 (threonine 167) interacts with (2E)-4-hydroxy-3-methylbut-2-enyl diphosphate. Residue cysteine 197 coordinates [4Fe-4S] cluster. (2E)-4-hydroxy-3-methylbut-2-enyl diphosphate is bound by residues serine 225, serine 226, asparagine 227, and serine 269. The dimethylallyl diphosphate site is built by serine 225, serine 226, asparagine 227, and serine 269. Isopentenyl diphosphate is bound by residues serine 225, serine 226, asparagine 227, and serine 269.

It belongs to the IspH family. It depends on [4Fe-4S] cluster as a cofactor.

The catalysed reaction is isopentenyl diphosphate + 2 oxidized [2Fe-2S]-[ferredoxin] + H2O = (2E)-4-hydroxy-3-methylbut-2-enyl diphosphate + 2 reduced [2Fe-2S]-[ferredoxin] + 2 H(+). The enzyme catalyses dimethylallyl diphosphate + 2 oxidized [2Fe-2S]-[ferredoxin] + H2O = (2E)-4-hydroxy-3-methylbut-2-enyl diphosphate + 2 reduced [2Fe-2S]-[ferredoxin] + 2 H(+). It participates in isoprenoid biosynthesis; dimethylallyl diphosphate biosynthesis; dimethylallyl diphosphate from (2E)-4-hydroxy-3-methylbutenyl diphosphate: step 1/1. It functions in the pathway isoprenoid biosynthesis; isopentenyl diphosphate biosynthesis via DXP pathway; isopentenyl diphosphate from 1-deoxy-D-xylulose 5-phosphate: step 6/6. In terms of biological role, catalyzes the conversion of 1-hydroxy-2-methyl-2-(E)-butenyl 4-diphosphate (HMBPP) into a mixture of isopentenyl diphosphate (IPP) and dimethylallyl diphosphate (DMAPP). Acts in the terminal step of the DOXP/MEP pathway for isoprenoid precursor biosynthesis. In Mannheimia succiniciproducens (strain KCTC 0769BP / MBEL55E), this protein is 4-hydroxy-3-methylbut-2-enyl diphosphate reductase.